A 153-amino-acid chain; its full sequence is Membrane-spanning 4-domains subfamily A member 13 (153 aa).

4 consecutive transmembrane segments (helical) span residues 1 to 21 (MTGI…MGQI), 36 to 56 (GCSL…RATW), 71 to 91 (ILCM…LSTF), and 111 to 131 (VLLS…IFGC).

This sequence belongs to the MS4A family.

It localises to the membrane. Its function is as follows. May be involved in signal transduction as a component of a multimeric receptor complex. The sequence is that of Membrane-spanning 4-domains subfamily A member 13 (MS4A13) from Bos taurus (Bovine).